We begin with the raw amino-acid sequence, 38 residues long: Cytochrome b6-f complex subunit 5 (38 aa).

A helical membrane pass occupies residues 5–25 (LLSGIVLGLIPITLAGLFVTA).

Belongs to the PetG family. As to quaternary structure, the 4 large subunits of the cytochrome b6-f complex are cytochrome b6, subunit IV (17 kDa polypeptide, PetD), cytochrome f and the Rieske protein, while the 4 small subunits are PetG, PetL, PetM and PetN. The complex functions as a dimer.

The protein resides in the plastid. Its subcellular location is the chloroplast thylakoid membrane. Component of the cytochrome b6-f complex, which mediates electron transfer between photosystem II (PSII) and photosystem I (PSI), cyclic electron flow around PSI, and state transitions. PetG is required for either the stability or assembly of the cytochrome b6-f complex. The chain is Cytochrome b6-f complex subunit 5 from Adiantum capillus-veneris (Maidenhair fern).